The chain runs to 163 residues: Nucleotide-binding protein YajQ (163 aa).

Belongs to the YajQ family.

In terms of biological role, nucleotide-binding protein. The sequence is that of Nucleotide-binding protein YajQ from Shigella flexneri.